The sequence spans 288 residues: UDP-3-O-acyl-N-acetylglucosamine deacetylase (288 aa).

Residues H79, H236, and D240 each contribute to the Zn(2+) site. Residue H263 is the Proton donor of the active site.

The protein belongs to the LpxC family. Zn(2+) serves as cofactor.

It carries out the reaction a UDP-3-O-[(3R)-3-hydroxyacyl]-N-acetyl-alpha-D-glucosamine + H2O = a UDP-3-O-[(3R)-3-hydroxyacyl]-alpha-D-glucosamine + acetate. It participates in glycolipid biosynthesis; lipid IV(A) biosynthesis; lipid IV(A) from (3R)-3-hydroxytetradecanoyl-[acyl-carrier-protein] and UDP-N-acetyl-alpha-D-glucosamine: step 2/6. Catalyzes the hydrolysis of UDP-3-O-myristoyl-N-acetylglucosamine to form UDP-3-O-myristoylglucosamine and acetate, the committed step in lipid A biosynthesis. The protein is UDP-3-O-acyl-N-acetylglucosamine deacetylase of Rickettsia bellii (strain OSU 85-389).